Here is a 386-residue protein sequence, read N- to C-terminus: Heavy metal-associated isoprenylated plant protein 5 (386 aa).

The span at 1–16 (MGEVQEGPKVEQEKKP) shows a compositional bias: basic and acidic residues. Positions 1-40 (MGEVQEGPKVEQEKKPAATVVPVETTDGKPKSGGGDSAAA) are disordered. In terms of domain architecture, HMA 1 spans 49–112 (VSAFVYKVDM…KLEEKTKRKV (64 aa)). Cys-60 and Cys-63 together coordinate a metal cation. The tract at residues 129–153 (VGEKKADGGDKEAAPPAPAPAAPKE) is disordered. Over residues 130 to 141 (GEKKADGGDKEA) the composition is skewed to basic and acidic residues. The region spanning 153-220 (ESVVPLKIRL…KLKRTVEPLV (68 aa)) is the HMA 2 domain. A metal cation contacts are provided by Cys-164 and Cys-167. Basic and acidic residues-rich tracts occupy residues 223 to 245 (KKDD…KKEA) and 252 to 297 (EAKK…KKDG). The tract at residues 223–301 (KKDDGAAENK…EKKKDGGGVP (79 aa)) is disordered. At Cys-383 the chain carries Cysteine methyl ester. Cys-383 is lipidated: S-farnesyl cysteine. A propeptide spans 384-386 (SVM) (removed in mature form).

This sequence belongs to the HIPP family. In terms of processing, efficiently farnesylated in vitro.

In terms of biological role, heavy-metal-binding protein. Involved in disease resistance. This Arabidopsis thaliana (Mouse-ear cress) protein is Heavy metal-associated isoprenylated plant protein 5.